Consider the following 286-residue polypeptide: MHIKVVHKSVKIKFSKMHGLGNDFIIINAMMQKTFPVTSNIIQNLSNRYTGIGFDQLLLVENSKNVNIDFHYRIFNANGTEVSQCGNGARCFALFVLLKKLTKKRTLYVSTNTTTLILNVLNNGNVCVDMGVPCFKLKNIFGENIIENSLHSIKFVNKIINYDLVSIGNPHCIIYVNNLKKYPVKKIGFYLSTHKIFPEGINVNFVEVLSKNEIALRVYERGVGETLACGSGACASVALGIQQGLLFNEVQVNLLNGILKINWKGGSEKLYMTGPAVHVYDGYFYL.

3 residues coordinate substrate: Asn-22, Gln-56, and Asn-76. Catalysis depends on Cys-85, which acts as the Proton donor. Residues 86-87 (GN), Asn-169, Asn-202, and 220-221 (ER) each bind substrate. The active-site Proton acceptor is Cys-229. 230 to 231 (GS) provides a ligand contact to substrate.

This sequence belongs to the diaminopimelate epimerase family. In terms of assembly, homodimer.

It localises to the cytoplasm. The catalysed reaction is (2S,6S)-2,6-diaminopimelate = meso-2,6-diaminopimelate. The protein operates within amino-acid biosynthesis; L-lysine biosynthesis via DAP pathway; DL-2,6-diaminopimelate from LL-2,6-diaminopimelate: step 1/1. In terms of biological role, catalyzes the stereoinversion of LL-2,6-diaminopimelate (L,L-DAP) to meso-diaminopimelate (meso-DAP), a precursor of L-lysine and an essential component of the bacterial peptidoglycan. The protein is Diaminopimelate epimerase of Buchnera aphidicola subsp. Baizongia pistaciae (strain Bp).